A 131-amino-acid polypeptide reads, in one-letter code: Spermatocyte protein spe-27 (131 aa).

Positions M1–S17 are cleaved as a signal peptide.

In terms of biological role, required for spermiogenesis. This chain is Spermatocyte protein spe-27 (spe-27), found in Caenorhabditis elegans.